A 222-amino-acid polypeptide reads, in one-letter code: MSDISDANKLKHRFRGYFPVVIDVETAGFNSQTDALLEIAVTLLKMDDEGLLGIDKTLHFNIEPFEGANLEPEALAFNGIDPTNPLRGAVSEKEAFLEIFKAVKKAQKASDCHRSIIVAHNAAFDHGFVSKAIERCDLKRSPFHPFATFDTATLAGLAIGHTVLAKACIMAGIPFDNKEAHSALYDTERTAELFCYIVNRWKHLGGWPLLAAGESEDTDGEE.

The 175-residue stretch at 20–194 (VVIDVETAGF…YDTERTAELF (175 aa)) folds into the Exonuclease domain. The Mg(2+) site is built by aspartate 23, glutamate 25, histidine 181, and aspartate 186. Catalysis depends on histidine 181, which acts as the Proton donor/acceptor.

It belongs to the RNase T family. As to quaternary structure, homodimer. It depends on Mg(2+) as a cofactor.

Its function is as follows. Trims short 3' overhangs of a variety of RNA species, leaving a one or two nucleotide 3' overhang. Responsible for the end-turnover of tRNA: specifically removes the terminal AMP residue from uncharged tRNA (tRNA-C-C-A). Also appears to be involved in tRNA biosynthesis. In Shewanella sp. (strain MR-4), this protein is Ribonuclease T.